The chain runs to 326 residues: N-acetyl-gamma-glutamyl-phosphate reductase (326 aa).

Cys155 is an active-site residue.

This sequence belongs to the NAGSA dehydrogenase family. Type 1 subfamily.

Its subcellular location is the cytoplasm. It catalyses the reaction N-acetyl-L-glutamate 5-semialdehyde + phosphate + NADP(+) = N-acetyl-L-glutamyl 5-phosphate + NADPH + H(+). It functions in the pathway amino-acid biosynthesis; L-arginine biosynthesis; N(2)-acetyl-L-ornithine from L-glutamate: step 3/4. In terms of biological role, catalyzes the NADPH-dependent reduction of N-acetyl-5-glutamyl phosphate to yield N-acetyl-L-glutamate 5-semialdehyde. The chain is N-acetyl-gamma-glutamyl-phosphate reductase from Shewanella baltica (strain OS185).